The following is a 602-amino-acid chain: Cytoskeleton-associated protein 4 (602 aa).

The interval 1–83 (MPSAKQRGSK…GGGGKSSSSS (83 aa)) is disordered. The Cytoplasmic portion of the chain corresponds to 1–106 (MPSAKQRGSK…SASCSRRLGR (106 aa)). Phosphoserine is present on residues S3, S17, and S19. N6-acetyllysine is present on K21. The span at 35–52 (KPPPAPQQPPPPPAPHPQ) shows a compositional bias: pro residues. Residues 53 to 64 (QHPQQHPQNQAH) show a composition bias toward low complexity. C100 carries the S-palmitoyl cysteine; by ZDHHC2 lipid modification. Residues 107–127 (ALNFLFYLALVAAAAFSGWCV) form a helical membrane-spanning segment. At 128–602 (HHVLEEVQQV…VKVEKIHEKV (475 aa)) the chain is on the extracellular side. Positions 130–214 (VLEEVQQVRR…QKLQNEILKD (85 aa)) form a coiled coil. The residue at position 232 (S232) is a Phosphoserine; by FAM20C. Coiled coils occupy residues 256-460 (TEVQ…GLGS) and 533-602 (LSSL…HEKV). At S312 the chain carries Phosphoserine.

Interacts with REEP5. Post-translationally, reversibly palmitoylated. Palmitoylation at Cys-100 by ZDHHC2 is required for its trafficking from the ER to the plasma membrane and for its perinuclear localization. Palmitoylation by ZDHHC2 is also required for its function in APF-mediated antiproliferative signaling. In terms of processing, increased phosphorylation during mitosis prevents binding to microtubules.

It localises to the endoplasmic reticulum membrane. The protein resides in the cell membrane. The protein localises to the cytoplasm. Its subcellular location is the cytoskeleton. It is found in the perinuclear region. In terms of biological role, mediates the anchoring of the endoplasmic reticulum to microtubules. High-affinity epithelial cell surface receptor for the FZD8-related low molecular weight sialoglycopeptide APF/antiproliferative factor. Mediates the APF antiproliferative signaling within cells. The polypeptide is Cytoskeleton-associated protein 4 (CKAP4) (Homo sapiens (Human)).